The primary structure comprises 247 residues: Uridylate kinase (247 aa).

16 to 19 (KLSG) serves as a coordination point for ATP. G58 lines the UMP pocket. 2 residues coordinate ATP: G59 and R63. UMP is bound by residues D78 and 139-146 (TGNPFFTT). Residues T166, Y172, and D175 each contribute to the ATP site.

Belongs to the UMP kinase family. As to quaternary structure, homohexamer.

The protein localises to the cytoplasm. The enzyme catalyses UMP + ATP = UDP + ADP. The protein operates within pyrimidine metabolism; CTP biosynthesis via de novo pathway; UDP from UMP (UMPK route): step 1/1. With respect to regulation, inhibited by UTP. In terms of biological role, catalyzes the reversible phosphorylation of UMP to UDP. This chain is Uridylate kinase, found in Xylella fastidiosa (strain Temecula1 / ATCC 700964).